The primary structure comprises 1038 residues: Dorsal-ventral patterning protein Sog (1038 aa).

The Cytoplasmic portion of the chain corresponds to 1–53 (MANKLRKSNAIEWATATGTVPLLERSCCHSEDAALEPQASKTSHREQAPILRH). A helical; Signal-anchor for type II membrane protein transmembrane segment spans residues 54-74 (LSQLSHLLIIAGLLIVCLAGV). Residues 75–1038 (TEGRRHAPLM…QPHHQQRSSS (964 aa)) lie on the Extracellular side of the membrane. A VWFC 1 domain is found at 100–175 (TECQFGKVLR…LPGKCCKTCP (76 aa)). N-linked (GlcNAc...) asparagine glycans are attached at residues asparagine 179 and asparagine 287. CHRD domains are found at residues 197-337 (NMKH…KYTA), 339-471 (QTEL…TRAS), 474-588 (IFQT…PRPV), and 592-713 (RDSA…STKV). N-linked (GlcNAc...) asparagine glycans are attached at residues asparagine 520, asparagine 666, asparagine 752, and asparagine 821. In terms of domain architecture, VWFC 2 spans 742 to 804 (TKCFHSGRFY…RDGECCPSCV (63 aa)). 2 VWFC domains span residues 830 to 899 (RGCR…KICP) and 939 to 1020 (GGCK…TQCR).

This sequence belongs to the chordin family. In terms of assembly, component of a complex composed of dpp, sog and tsg. Interacts with palmitoyltransferase Hip14. Palmitoylated, probably by Hip14. Post-translationally, cleaved by metalloproteases tok and tld. Cleavage by tok during pupal development contributes to specification of the posterior crossvein in the wing. As to expression, abuts the dorsal dpp-expressing cells in a lateral stripe 14-16 cells wide. Later in embryogenesis it is expressed in neuroectoderm and in the endoderm spaced along the anterior-posterior axis of the developing gut.

The protein localises to the golgi apparatus membrane. It localises to the cell membrane. Its subcellular location is the secreted. Functionally, putative negative growth factor. Antagonist of dpp, a protein involved in patterning the dorsal region and in the development of the neuroectoderm; dpp inhibition is enhanced by tsg. Required for establishment of a narrow stripe of peak levels of BMP signaling in the dorsal midline of early embryos, that will give rise to the amnioserosa. During pupal development, plays a role in specification of the posterior crossvein in the wing. Exhibits both agonist and antagonist activities towards BMP signaling during pupal wing patterning. This Drosophila melanogaster (Fruit fly) protein is Dorsal-ventral patterning protein Sog (sog).